The following is a 168-amino-acid chain: uncharacterized protein (168 aa).

Helical transmembrane passes span 4 to 24 and 94 to 114; these read IIAL…PEEE and IMVG…GFAW.

The protein to A.aeolicus aq_1446.

Its subcellular location is the cell membrane. This is an uncharacterized protein from Aquifex aeolicus (strain VF5).